Here is a 262-residue protein sequence, read N- to C-terminus: Methionine-rich nacre protein (262 aa).

An N-terminal signal peptide occupies residues 1 to 22; the sequence is MSIMRRILCLAVVIFIINDVSS. The span at 26-35 shows a compositional bias: low complexity; the sequence is GNNKNWKKNG. Positions 26 to 84 are disordered; the sequence is GNNKNWKKNGMSLSSPGNKKPTGNNAVPQKSKMNNMNQNSLSQPKRSSPPGNSMYNMAN. Over residues 36 to 84 the composition is skewed to polar residues; it reads MSLSSPGNKKPTGNNAVPQKSKMNNMNQNSLSQPKRSSPPGNSMYNMAN.

In terms of tissue distribution, expressed in mantle and, after secretion, incorporated into acid-insoluble nacre matrix of the shell (at protein level). Expressed primarily in the mantle with highest level in the mantle pallium and lower level in the mantle edge.

It localises to the secreted. The chain is Methionine-rich nacre protein from Pinctada maxima (Silver-lipped pearl oyster).